Reading from the N-terminus, the 162-residue chain is Shikimate kinase (162 aa).

Gly-11–Ser-16 serves as a coordination point for ATP. Ser-15 contacts Mg(2+). Residues Asp-33, Arg-57, and Gly-80 each contribute to the substrate site. An ATP-binding site is contributed by Arg-116. Arg-132 serves as a coordination point for substrate.

Belongs to the shikimate kinase family. Monomer. Requires Mg(2+) as cofactor.

It is found in the cytoplasm. It catalyses the reaction shikimate + ATP = 3-phosphoshikimate + ADP + H(+). It functions in the pathway metabolic intermediate biosynthesis; chorismate biosynthesis; chorismate from D-erythrose 4-phosphate and phosphoenolpyruvate: step 5/7. Functionally, catalyzes the specific phosphorylation of the 3-hydroxyl group of shikimic acid using ATP as a cosubstrate. In Helicobacter acinonychis (strain Sheeba), this protein is Shikimate kinase.